Reading from the N-terminus, the 334-residue chain is Ribosomal RNA small subunit methyltransferase H (334 aa).

S-adenosyl-L-methionine-binding positions include 34 to 36, D52, A87, D100, and Q107; that span reads GGY.

It belongs to the methyltransferase superfamily. RsmH family.

Its subcellular location is the cytoplasm. It carries out the reaction cytidine(1402) in 16S rRNA + S-adenosyl-L-methionine = N(4)-methylcytidine(1402) in 16S rRNA + S-adenosyl-L-homocysteine + H(+). In terms of biological role, specifically methylates the N4 position of cytidine in position 1402 (C1402) of 16S rRNA. The chain is Ribosomal RNA small subunit methyltransferase H from Maricaulis maris (strain MCS10) (Caulobacter maris).